Consider the following 213-residue polypeptide: Thymidylate kinase (213 aa).

An ATP-binding site is contributed by 11–18; the sequence is GPEGAGKT.

It belongs to the thymidylate kinase family.

The catalysed reaction is dTMP + ATP = dTDP + ADP. Functionally, phosphorylation of dTMP to form dTDP in both de novo and salvage pathways of dTTP synthesis. The sequence is that of Thymidylate kinase from Leuconostoc mesenteroides subsp. mesenteroides (strain ATCC 8293 / DSM 20343 / BCRC 11652 / CCM 1803 / JCM 6124 / NCDO 523 / NBRC 100496 / NCIMB 8023 / NCTC 12954 / NRRL B-1118 / 37Y).